The sequence spans 190 residues: Ladderlectin (190 aa).

The N-terminal stretch at 1–18 is a signal peptide; sequence MAMLTISLLLCAAVALNG. One can recognise a C-type lectin domain in the interval 60 to 179; it reads GSRCFMFVET…GNSFPSGVLQ (120 aa). A disulfide bond links C153 and C169.

Multimeric. As to expression, expressed in cells of the branchial epithelium, hepatic sinusoids, biliary epithelium, renal interstitium, skin, and sub-mucosal granular layer of the intestine. Highly expressed in caudal kidney. Moderately expressed in liver. Weakly expressed in gill, spleen, cranial kidney and skin. Isoform 1 is highly expressed in intestine. Isoform 2 is weakly expressed in intestine.

Lectin that binds sepharose in a calcium-dependent manner. In Oncorhynchus mykiss (Rainbow trout), this protein is Ladderlectin.